We begin with the raw amino-acid sequence, 380 residues long: tRNA(Met) cytidine acetate ligase (380 aa).

ATP-binding positions include 7 to 20 (ITEY…HLYH), Gly-100, Asn-153, and Arg-178.

The protein belongs to the TmcAL family.

The protein localises to the cytoplasm. The enzyme catalyses cytidine(34) in elongator tRNA(Met) + acetate + ATP = N(4)-acetylcytidine(34) in elongator tRNA(Met) + AMP + diphosphate. Its function is as follows. Catalyzes the formation of N(4)-acetylcytidine (ac(4)C) at the wobble position of elongator tRNA(Met), using acetate and ATP as substrates. First activates an acetate ion to form acetyladenylate (Ac-AMP) and then transfers the acetyl group to tRNA to form ac(4)C34. This Staphylococcus haemolyticus (strain JCSC1435) protein is tRNA(Met) cytidine acetate ligase.